The primary structure comprises 189 residues: MRVGVLGVQGSVKEHMDKLKLIKGIEAVEAKDKDTLLTLDALIIPGGESTAIGKILVDFGLKDAILKLNERKVPIWGTCAGMILMAKHIVNDERRHLGIMDITVRRNAYGSQINSFKTRLIIPAISENEIEAVFIRAPYIESVGDGVRILAKYEGKIVAAQQDNLLATAFHPELTDDLSFYRYFLRLNS.

Residue 47 to 49 (GES) participates in L-glutamine binding. Cysteine 79 acts as the Nucleophile in catalysis. L-glutamine contacts are provided by residues arginine 106 and 135-136 (IR). Residues histidine 171 and glutamate 173 each act as charge relay system in the active site.

This sequence belongs to the glutaminase PdxT/SNO family. In the presence of PdxS, forms a dodecamer of heterodimers. Only shows activity in the heterodimer.

The catalysed reaction is aldehydo-D-ribose 5-phosphate + D-glyceraldehyde 3-phosphate + L-glutamine = pyridoxal 5'-phosphate + L-glutamate + phosphate + 3 H2O + H(+). The enzyme catalyses L-glutamine + H2O = L-glutamate + NH4(+). It functions in the pathway cofactor biosynthesis; pyridoxal 5'-phosphate biosynthesis. Catalyzes the hydrolysis of glutamine to glutamate and ammonia as part of the biosynthesis of pyridoxal 5'-phosphate. The resulting ammonia molecule is channeled to the active site of PdxS. The protein is Pyridoxal 5'-phosphate synthase subunit PdxT of Caldanaerobacter subterraneus subsp. tengcongensis (strain DSM 15242 / JCM 11007 / NBRC 100824 / MB4) (Thermoanaerobacter tengcongensis).